Here is a 401-residue protein sequence, read N- to C-terminus: Argininosuccinate synthase (401 aa).

ATP is bound at residue 8-16; that stretch reads AYSGGLDTS. Residues tyrosine 86 and serine 91 each coordinate L-citrulline. Glycine 116 lines the ATP pocket. L-aspartate-binding residues include threonine 118, asparagine 122, and aspartate 123. Residue asparagine 122 coordinates L-citrulline. L-citrulline is bound by residues arginine 126, serine 175, serine 184, glutamate 260, and tyrosine 272.

Belongs to the argininosuccinate synthase family. Type 1 subfamily. Homotetramer.

The protein resides in the cytoplasm. The enzyme catalyses L-citrulline + L-aspartate + ATP = 2-(N(omega)-L-arginino)succinate + AMP + diphosphate + H(+). It participates in amino-acid biosynthesis; L-arginine biosynthesis; L-arginine from L-ornithine and carbamoyl phosphate: step 2/3. The protein is Argininosuccinate synthase of Clostridium kluyveri (strain ATCC 8527 / DSM 555 / NBRC 12016 / NCIMB 10680 / K1).